The primary structure comprises 154 residues: Large ribosomal subunit protein uL23 (154 aa).

Belongs to the universal ribosomal protein uL23 family.

This protein binds to a specific region on the 26S rRNA. The polypeptide is Large ribosomal subunit protein uL23 (RPL23A) (Daucus carota (Wild carrot)).